The chain runs to 331 residues: Hyaluronidase A (331 aa).

Intrachain disulfides connect Cys-19-Cys-308 and Cys-185-Cys-197. N-linked (GlcNAc...) asparagine glycans are attached at residues Asn-79 and Asn-99. Glu-109 acts as the Proton donor in catalysis. N-linked (GlcNAc...) asparagine glycosylation occurs at Asn-127. The N-linked (GlcNAc...) asparagine glycan is linked to Asn-325.

This sequence belongs to the glycosyl hydrolase 56 family. As to expression, expressed by the venom gland.

Its subcellular location is the secreted. The catalysed reaction is Random hydrolysis of (1-&gt;4)-linkages between N-acetyl-beta-D-glucosamine and D-glucuronate residues in hyaluronate.. Hydrolyzes high molecular weight hyaluronic acid to produce small oligosaccharides. This Vespula vulgaris (Yellow jacket) protein is Hyaluronidase A.